The primary structure comprises 131 residues: D-ribose pyranase (131 aa).

The active-site Proton donor is H20. Substrate is bound by residues D28, H98, and 120-122 (YAN).

It belongs to the RbsD / FucU family. RbsD subfamily. As to quaternary structure, homodecamer.

It localises to the cytoplasm. The enzyme catalyses beta-D-ribopyranose = beta-D-ribofuranose. The protein operates within carbohydrate metabolism; D-ribose degradation; D-ribose 5-phosphate from beta-D-ribopyranose: step 1/2. Its function is as follows. Catalyzes the interconversion of beta-pyran and beta-furan forms of D-ribose. The protein is D-ribose pyranase of Bacillus cereus (strain AH187).